The following is a 312-amino-acid chain: Pseudouridine-5'-phosphate glycosidase (312 aa).

Glutamate 31 functions as the Proton donor in the catalytic mechanism. Lysine 93 and valine 113 together coordinate substrate. Residue aspartate 145 coordinates Mn(2+). Residue 147 to 149 coordinates substrate; it reads SAD. Catalysis depends on lysine 166, which acts as the Nucleophile.

Belongs to the pseudouridine-5'-phosphate glycosidase family. In terms of assembly, homotrimer. The cofactor is Mn(2+). Fe(2+) serves as cofactor. It depends on Co(2+) as a cofactor.

The catalysed reaction is D-ribose 5-phosphate + uracil = psi-UMP + H2O. Its activity is regulated as follows. Inhibited by Zn(2+) and Ni(2+). Its function is as follows. Catalyzes the reversible cleavage of pseudouridine 5'-phosphate (PsiMP) to ribose 5-phosphate and uracil. Functions biologically in the cleavage direction, as part of a pseudouridine degradation pathway. This chain is Pseudouridine-5'-phosphate glycosidase, found in Escherichia coli (strain K12).